The chain runs to 558 residues: Cytochrome c oxidase subunit 1-beta (558 aa).

Residues 1 to 28 (MADAAVHGHGDHHDTRGFFTRWFMSTNH) are Cytoplasmic-facing. Residues 29 to 59 (KDIGILYLFTAGIVGLISVCFTVYMRMELQH) form a helical membrane-spanning segment. Residues 60–82 (PGVQYMCLEGARLIADASAECTP) are Periplasmic-facing. A disulfide bridge connects residues Cys66 and Cys80. A helical membrane pass occupies residues 83–120 (NGHLWNVMITYHGVLMMFFVVIPALFGGFGNYFMPLHI). His94 provides a ligand contact to Fe(II)-heme a. The Cytoplasmic segment spans residues 121–126 (GAPDMA). The chain crosses the membrane as a helical span at residues 127-151 (FPRLNNLSYWMYVCGVALGVASLLA). At 152–176 (PGGNDQMGSGVGWVLYPPLSTTEAG) the chain is on the periplasmic side. The chain crosses the membrane as a helical span at residues 177 to 206 (YSMDLAIFAVHVSGASSILGAINIITTFLN). Over 207 to 217 (MRAPGMTLFKV) the chain is Cytoplasmic. The helical transmembrane segment at 218–251 (PLFAWSVFITAWLILLSLPVLAGAITMLLMDRNF) threads the bilayer. Topologically, residues 252–262 (GTQFFDPAGGG) are periplasmic. Residues 263–299 (DPVLYQHILWFFGHPEVYIIILPGFGIISHVISTFAK) form a helical membrane-spanning segment. Cu cation-binding residues include His276 and Tyr280. Positions 276 to 280 (HPEVY) form a cross-link, 1'-histidyl-3'-tyrosine (His-Tyr). Topologically, residues 300–303 (KPIF) are cytoplasmic. The helical transmembrane segment at 304–331 (GYLPMVLAMAAIGILGFVVWAHHMYTAG) threads the bilayer. Residues His325 and His326 each coordinate Cu cation. A topological domain (periplasmic) is located at residue Met332. A helical membrane pass occupies residues 333–364 (SLTQQAYFMLATMTIAVPTGIKVFSWIATMWG). The Cytoplasmic segment spans residues 365 to 369 (GSIEF). The helical transmembrane segment at 370–395 (KTPMLWAFGFLFLFTVGGVTGVVLSQ) threads the bilayer. At 396–404 (APLDRVYHD) the chain is on the periplasmic side. A helical transmembrane segment spans residues 405–437 (TYYVVAHFHYVMSLGAVFGIFAGVYYWIGKMSG). His411 contacts heme a3. His413 contributes to the Fe(II)-heme a binding site. The Cytoplasmic portion of the chain corresponds to 438 to 440 (RQY). Residues 441-469 (PEWAGQLHFWMMFIGSNLIFFPQHFLGRQ) traverse the membrane as a helical segment. Topologically, residues 470–478 (GMPRRYIDY) are periplasmic. A helical transmembrane segment spans residues 479-514 (PVEFAYWNNISSIGAYISFASFLFFIGIVFYTLFAG). Over 515–558 (KRVNVPNYWNEHADTLEWTLPSPPPEHTFETLPKREDWDRAHAH) the chain is Cytoplasmic.

Belongs to the heme-copper respiratory oxidase family. Cu(2+) serves as cofactor. Requires heme as cofactor. In terms of processing, his-276 and Tyr-280 are involved in the formation of a copper-coordinated covalent cross-link at the active site of the catalytic subunit I.

The protein resides in the cell inner membrane. It carries out the reaction 4 Fe(II)-[cytochrome c] + O2 + 8 H(+)(in) = 4 Fe(III)-[cytochrome c] + 2 H2O + 4 H(+)(out). It functions in the pathway energy metabolism; oxidative phosphorylation. Functionally, subunit I and II form the functional core of the enzyme complex. Electrons originating in cytochrome c are transferred via heme a and Cu(A) to the binuclear center formed by heme a3 and Cu(B). This cytochrome c oxidase shows proton pump activity across the membrane in addition to the electron transfer. This Paracoccus denitrificans protein is Cytochrome c oxidase subunit 1-beta (ctaDII).